A 154-amino-acid chain; its full sequence is Ribonuclease P protein component (154 aa).

It belongs to the RnpA family. Consists of a catalytic RNA component (M1 or rnpB) and a protein subunit.

It carries out the reaction Endonucleolytic cleavage of RNA, removing 5'-extranucleotides from tRNA precursor.. Its function is as follows. RNaseP catalyzes the removal of the 5'-leader sequence from pre-tRNA to produce the mature 5'-terminus. It can also cleave other RNA substrates such as 4.5S RNA. The protein component plays an auxiliary but essential role in vivo by binding to the 5'-leader sequence and broadening the substrate specificity of the ribozyme. This chain is Ribonuclease P protein component, found in Chlorobaculum tepidum (strain ATCC 49652 / DSM 12025 / NBRC 103806 / TLS) (Chlorobium tepidum).